Reading from the N-terminus, the 20-residue chain is Outer membrane protein 40Va (20 aa).

The protein belongs to the Gram-negative porin family. As to quaternary structure, homotrimer.

The protein resides in the cell outer membrane. Its function is as follows. Forms pores that allow passive diffusion of small molecules across the outer membrane. The protein is Outer membrane protein 40Va of Vibrio alginolyticus.